The primary structure comprises 319 residues: Lipase 1 (319 aa).

Catalysis depends on Ser-189, which acts as the Nucleophile. Ca(2+) is bound by residues Asp-314 and Asp-317.

It carries out the reaction a triacylglycerol + H2O = a diacylglycerol + a fatty acid + H(+). The polypeptide is Lipase 1 (lip1) (Moraxella sp. (strain TA144)).